A 134-amino-acid chain; its full sequence is Early E3B 14.5 kDa protein (134 aa).

Residues 1–21 form the signal peptide; that stretch reads MQAMLPVILILLLPCIPLAST. Residues 54-78 form a helical membrane-spanning segment; sequence YWIVIVGIINILSCTFFSITIYPTF.

The protein belongs to the adenoviridae E3_14 family. In terms of processing, phosphorylated on serine; O-glycosylated, but not N-glycosylated.

Its subcellular location is the host membrane. In terms of biological role, down-regulates the EGF receptor and prevents cytolysis by TNF. This chain is Early E3B 14.5 kDa protein, found in Homo sapiens (Human).